The following is a 506-amino-acid chain: Glutamyl-tRNA(Gln) amidotransferase subunit A, mitochondrial (506 aa).

Residues Lys-62 and Ser-141 each act as charge relay system in the active site. The active-site Acyl-ester intermediate is Ser-165.

This sequence belongs to the amidase family. GatA subfamily. In terms of assembly, subunit of the heterotrimeric GatCAB amidotransferase (AdT) complex, composed of A, B and C subunits.

Its subcellular location is the mitochondrion. The enzyme catalyses L-glutamyl-tRNA(Gln) + L-glutamine + ATP + H2O = L-glutaminyl-tRNA(Gln) + L-glutamate + ADP + phosphate + H(+). Functionally, allows the formation of correctly charged Gln-tRNA(Gln) through the transamidation of misacylated Glu-tRNA(Gln) in the mitochondria. The reaction takes place in the presence of glutamine and ATP through an activated gamma-phospho-Glu-tRNA(Gln). The protein is Glutamyl-tRNA(Gln) amidotransferase subunit A, mitochondrial of Emericella nidulans (strain FGSC A4 / ATCC 38163 / CBS 112.46 / NRRL 194 / M139) (Aspergillus nidulans).